We begin with the raw amino-acid sequence, 553 residues long: Chaperonin GroEL 1 (553 aa).

Residues 29–32 (TIGP), 86–90 (DGTTT), Gly-413, 476–478 (NAL), and Asp-492 contribute to the ATP site. The segment at 520 to 543 (DKPEPPAPAGGGGDPMGGMGGMDP) is disordered. Positions 528–543 (AGGGGDPMGGMGGMDP) are enriched in gly residues.

This sequence belongs to the chaperonin (HSP60) family. In terms of assembly, forms a cylinder of 14 subunits composed of two heptameric rings stacked back-to-back. Interacts with the co-chaperonin GroES.

Its subcellular location is the cytoplasm. It carries out the reaction ATP + H2O + a folded polypeptide = ADP + phosphate + an unfolded polypeptide.. Functionally, together with its co-chaperonin GroES, plays an essential role in assisting protein folding. The GroEL-GroES system forms a nano-cage that allows encapsulation of the non-native substrate proteins and provides a physical environment optimized to promote and accelerate protein folding. This chain is Chaperonin GroEL 1, found in Synechococcus sp. (strain CC9311).